The chain runs to 1013 residues: AP-2 complex subunit alpha-2 (1013 aa).

HEAT repeat units lie at residues 254 to 289 (AMRA…VVKN), 354 to 391 (DIIK…VSNA), 393 to 430 (DIVE…DLSW), and 521 to 565 (TVST…CIDV). Positions 652–676 (STDPESVARSLSHPNGTLSNIDPQT) are disordered. The span at 663–675 (SHPNGTLSNIDPQ) shows a compositional bias: polar residues. One can recognise a GAE domain in the interval 742-841 (ALCLKDSGVL…LDFSYKFGTN (100 aa)). Residues 760 to 1013 (GIKAEWRGHH…DPGAMLAGLL (254 aa)) are required for AP180 binding.

The protein belongs to the adaptor complexes large subunit family. In terms of assembly, adaptor protein complex 2 (AP-2) is a heterotetramer composed of two large adaptins (alpha-type and beta-type subunits), a medium adaptin (mu-type subunit) and a small adaptin (sigma-type subunit). Interacts with AP180.

It localises to the membrane. Its subcellular location is the coated pit. Functionally, subunit of the adaptor protein complex 2 (AP-2). Adaptor protein complexes function in protein transport via transport vesicles in different membrane traffic pathways. Adaptor protein complexes are vesicle coat components and appear to be involved in cargo selection and vesicle formation. AP-2 is involved in clathrin-dependent endocytosis in which cargo proteins are incorporated into vesicles surrounded by clathrin (clathrin-coated vesicles, CCVs) which are destined for fusion with the early endosome. The complex binds polyphosphoinositides. This is AP-2 complex subunit alpha-2 (ALPHAC-AD) from Arabidopsis thaliana (Mouse-ear cress).